Reading from the N-terminus, the 447-residue chain is Trigger factor (447 aa).

In terms of domain architecture, PPIase FKBP-type spans 164 to 249; that stretch reads GDLVVIDFIG…VKEVKQAVVP (86 aa).

Belongs to the FKBP-type PPIase family. Tig subfamily.

The protein localises to the cytoplasm. It carries out the reaction [protein]-peptidylproline (omega=180) = [protein]-peptidylproline (omega=0). In terms of biological role, involved in protein export. Acts as a chaperone by maintaining the newly synthesized protein in an open conformation. Functions as a peptidyl-prolyl cis-trans isomerase. The polypeptide is Trigger factor (Rhodospirillum rubrum (strain ATCC 11170 / ATH 1.1.1 / DSM 467 / LMG 4362 / NCIMB 8255 / S1)).